A 1166-amino-acid polypeptide reads, in one-letter code: Myosin-1 (1166 aa).

Over residues 1–13 (MSQKVTPFMQSLK) the composition is skewed to polar residues. Residues 1 to 71 (MSQKVTPFMQ…AGDSEDSPYS (71 aa)) form a disordered region. Ser14 is subject to Phosphoserine. The span at 32–45 (NSSGASVRLTNSNV) shows a compositional bias: polar residues. The 50-residue stretch at 112–161 (KKILQSWIQLPNGNWELGKILSTSGEESVISLPEGKVIKVISETLVPANP) folds into the Myosin N-terminal SH3-like domain. Residues 165-837 (DGVDDLMQLS…QIGVLEDTRN (673 aa)) form the Myosin motor domain. Residues 256–263 (GESGAGKT) and 304–312 (NDNSSRFGK) contribute to the ATP site. 2 actin-binding regions span residues 589–623 (LFEK…KQHL) and 717–739 (LFQL…KPNN). 4 IQ domains span residues 839-868 (TLHG…GISI), 862-891 (LKRG…RHKA), 888-917 (RHKA…ASVV), and 911-940 (IADA…LKSG). Residues 955–1005 (SVLSELQRRVLKAEAALREKEEENDILQQRLQQYENRWSEYETKMKSMEEI) adopt a coiled-coil conformation. A disordered region spans residues 1030-1065 (ARNSDASVNASDATDWDSSSNQFRSQTSNGVGSRLQ). Positions 1032 to 1060 (NSDASVNASDATDWDSSSNQFRSQTSNGV) are enriched in polar residues.

The protein belongs to the TRAFAC class myosin-kinesin ATPase superfamily. Myosin family. Plant myosin class VIII subfamily. As to quaternary structure, homodimer.

The protein localises to the cell junction. Its subcellular location is the plasmodesma. The protein resides in the cytoplasm. It localises to the cytoskeleton. It is found in the phragmoplast. The protein localises to the endosome. Its subcellular location is the endoplasmic reticulum. Myosin heavy chain that is required for the cell cycle-regulated transport of various organelles and proteins for their segregation. Functions by binding with its tail domain to receptor proteins on organelles and exerting force with its N-terminal motor domain against actin filaments, thereby transporting its cargo along polarized actin cables. Involved in endocytosis via its action in endosomal trafficking. In Arabidopsis thaliana (Mouse-ear cress), this protein is Myosin-1 (VIII-1).